The following is a 124-amino-acid chain: MAITKEDVLEFISNLSVLELSELVKEFEEKFGVSAAPVMVAGAAGGAAVEAAEEKTEFNIVLVDAGDKKINVIKVVRALTGLGLKEAKDAVEGTPSVLKEGVSKDEAEAAKKELEEAGAKVELK.

It belongs to the bacterial ribosomal protein bL12 family. Homodimer. Part of the ribosomal stalk of the 50S ribosomal subunit. Forms a multimeric L10(L12)X complex, where L10 forms an elongated spine to which 2 to 4 L12 dimers bind in a sequential fashion. Binds GTP-bound translation factors.

Forms part of the ribosomal stalk which helps the ribosome interact with GTP-bound translation factors. Is thus essential for accurate translation. This Campylobacter fetus subsp. fetus (strain 82-40) protein is Large ribosomal subunit protein bL12.